We begin with the raw amino-acid sequence, 367 residues long: Gelsolin-like protein 1 (367 aa).

Positions 1–185 are actin binding; it reads MATGLIKAKE…GQKQQIYVHE (185 aa). Gelsolin-like repeat units follow at residues 56 to 141 and 179 to 225; these read NFKV…ELFR and QQIY…KAMQ. Positions 106–109 are actin-actin interfilament contact point; that stretch reads DEYG. The segment at 186-295 is actin binding, Actin-severing; sequence VPLVKERLDH…LKTTEVKRGA (110 aa). The tract at residues 235–257 is disordered; that stretch reads PKAEAETLEDESTPESHKFYTSL. The stretch at 287–322 is one Gelsolin-like 3 repeat; it reads KTTEVKRGAVNSKDFSSNDVFILDTGDQCFVWVGKG. An actin-severing, Ca-sensitive region spans residues 296–366; sequence VNSKDFSSND…LCKAFNVAIA (71 aa).

It belongs to the villin/gelsolin family. Interacts with actin monomers and filaments. In terms of tissue distribution, expressed in circular and longitudinal muscle, pseudohearts, pharynx and gizzard. Also expressed in male germ cells at the proximal pole of primary spermatocytes in 16 cell-stage morulae, and in the distal parts of the spermatocytes in 32 and 64 cell-stage morulae. In the spermatids of the 128 cell-stage morulae it is expressed at the proximal pole of the elongated nucleus and the distal pole near the base of the flagellae.

Its subcellular location is the cytoplasm. The protein resides in the cytoskeleton. Its function is as follows. Calcium-regulated protein that binds to the plus (or barbed) ends of actin monomers or filaments, preventing monomer exchange (end-blocking or capping). Can promote the assembly of monomers into filaments (nucleation) as well as sever existing filaments. In Lumbricus terrestris (Common earthworm), this protein is Gelsolin-like protein 1.